We begin with the raw amino-acid sequence, 379 residues long: Succinyl-diaminopimelate desuccinylase (379 aa).

Residue His70 participates in Zn(2+) binding. Asp72 is a catalytic residue. A Zn(2+)-binding site is contributed by Asp103. Glu137 (proton acceptor) is an active-site residue. Zn(2+) contacts are provided by Glu138, Glu166, and His352.

Belongs to the peptidase M20A family. DapE subfamily. Homodimer. It depends on Zn(2+) as a cofactor. Co(2+) is required as a cofactor.

The catalysed reaction is N-succinyl-(2S,6S)-2,6-diaminopimelate + H2O = (2S,6S)-2,6-diaminopimelate + succinate. Its pathway is amino-acid biosynthesis; L-lysine biosynthesis via DAP pathway; LL-2,6-diaminopimelate from (S)-tetrahydrodipicolinate (succinylase route): step 3/3. Its function is as follows. Catalyzes the hydrolysis of N-succinyl-L,L-diaminopimelic acid (SDAP), forming succinate and LL-2,6-diaminopimelate (DAP), an intermediate involved in the bacterial biosynthesis of lysine and meso-diaminopimelic acid, an essential component of bacterial cell walls. In Shewanella baltica (strain OS223), this protein is Succinyl-diaminopimelate desuccinylase.